A 529-amino-acid polypeptide reads, in one-letter code: Amino acid transporter heavy chain SLC3A2 (529 aa).

A disordered region spans residues 1 to 20; it reads MSQDTEVDMKEVELNELEPE. At 1-84 the chain is on the cytoplasmic side; sequence MSQDTEVDMK…SPGWVRTRWA (84 aa). Ser2 bears the Phosphoserine mark. Thr5 is subject to Phosphothreonine. Positions 7 to 20 are enriched in basic and acidic residues; sequence VDMKEVELNELEPE. Lys49 participates in a covalent cross-link: Glycyl lysine isopeptide (Lys-Gly) (interchain with G-Cter in ubiquitin). Phosphoserine is present on Ser65. Residue Lys66 forms a Glycyl lysine isopeptide (Lys-Gly) (interchain with G-Cter in SUMO2) linkage. Residues 85 to 105 traverse the membrane as a helical; Signal-anchor for type II membrane protein segment; sequence LLLLFWLGWIGMLAGAVVIIV. Residues 106–529 lie on the Extracellular side of the membrane; sequence RAPRCRELPV…GLLLHFPYVA (424 aa). N-linked (GlcNAc...) asparagine glycosylation is present at Asn266. Residues Ser307 and Ser309 each carry the phosphoserine modification. 2 N-linked (GlcNAc...) asparagine glycosylation sites follow: Asn325 and Asn405. Ser426 carries the phosphoserine modification.

Belongs to the SLC3A transporter family. As to quaternary structure, disulfide-linked heterodimer with a non-glycosylated light chain (SLC7A5, SLC7A6, SLC7A7, SLC7A8, SLC7A10 or SLC7A11). Interacts with TLCD3A/CT120 and ICAM1. Constitutively and specifically associates with beta-1 integrins (alpha-2/beta-1, alpha-3/beta-1, alpha-5/beta-1 and alpha-6/beta-1), but minimally with alpha-4/beta-1. Interacts with LAPTM4B; recruits SLC3A2 and SLC7A5 to lysosomes to promote leucine uptake into these organelles and is required for mTORC1 activation. Phosphorylation on Ser-307 or Ser-309 and on Ser-426 by ecto-protein kinases favors heterotypic cell-cell interactions. Post-translationally, N-glycosylated; N-glycosylation is crucial for trafficking and stability of SLC3A2 to the plasma membrane.

The protein resides in the apical cell membrane. The protein localises to the cell membrane. It is found in the cell junction. Its subcellular location is the lysosome membrane. It localises to the melanosome. The protein resides in the basolateral cell membrane. Its function is as follows. Acts as a chaperone that facilitates biogenesis and trafficking of functional transporters heterodimers to the plasma membrane. Forms heterodimer with SLC7 family transporters (SLC7A5, SLC7A6, SLC7A7, SLC7A8, SLC7A10 and SLC7A11), a group of amino-acid antiporters. Heterodimers function as amino acids exchangers, the specificity of the substrate depending on the SLC7A subunit. Heterodimers formed by SLC3A2/SLC7A6 or SLC3A2/SLC7A7 mediate the uptake of dibasic amino acids. Heterodimer SLC3A2/SLC7A11 functions as an antiporter by mediating the exchange of extracellular anionic L-cystine and intracellular L-glutamate across the cellular plasma membrane. SLC3A2/SLC7A10 translocates small neutral L- and D-amino acids across the plasma membrane. SLC3A2/SLC75 or SLC3A2/SLC7A8 translocates neutral amino acids with broad specificity, thyroid hormones and L-DOPA. SLC3A2 is essential for plasma membrane localization, stability, and the transport activity of SLC7A5 and SLC7A8. When associated with LAPTM4B, the heterodimer SLC7A5 is recruited to lysosomes to promote leucine uptake into these organelles, and thereby mediates mTORC1 activation. Modulates integrin-related signaling and is essential for integrin-dependent cell spreading, migration and tumor progression. In Oryctolagus cuniculus (Rabbit), this protein is Amino acid transporter heavy chain SLC3A2.